The sequence spans 313 residues: Interferon-inducible double-stranded RNA-dependent protein kinase activator A (313 aa).

Residues 1–18 (MSQSRHRAEAPPLEREDS) are compositionally biased toward basic and acidic residues. Residues 1-21 (MSQSRHRAEAPPLEREDSGTF) are disordered. 3 sufficient for self-association and interaction with TARBP2 regions span residues 1 to 103 (MSQS…KANA), 102 to 195 (NASI…FSNI), and 195 to 313 (ISPE…AERK). S18 carries the post-translational modification Phosphoserine. 3 consecutive DRBM domains span residues 34–101 (TPIQ…ILKA), 126–194 (NPIG…KFSN), and 240–308 (DYIQ…YLKI). Phosphoserine is present on residues S167, S246, and S287.

It belongs to the PRKRA family. Homodimer. Interacts with EIF2AK2/PKR through its DRBM domains. Interacts with DICER1, AGO2 and TARBP2. Also able to interact with dsRNA. Interacts with UBC9. Forms a complex with UBC9 and p53/TP53. Interacts with DUS2L (via DRBM domain). Interacts with RIGI. In terms of assembly, (Microbial infection) Interacts with ebolavirus protein VP35; this interaction inhibits the interaction between RIGI and PRKRA. In addition, this interaction disrupts the interaction between VP35 and the viral polymerase L. So the VP35-PRKRA interaction plays a critical role in determining the outcome of ebolavirus infection. The interaction PRKRA-VP35 also prevents PRKRA binding to DICER1 and thus allows the virus to counteract host RNA silencing. As to quaternary structure, (Microbial infection) Interacts with human herpesvirus 8 protein MTA/ORF57; this interaction inhibits stress granule formation. In terms of processing, phosphorylated at Ser-246 in unstressed cells and at Ser-287 in stressed cells. Phosphorylation at Ser-246 appears to be a prerequisite for subsequent phosphorylation at Ser-287. Phosphorylation at Ser-246 and Ser-287 are necessary for activation of EIF2AK2/PKR under conditions of stress.

It is found in the cytoplasm. The protein localises to the perinuclear region. Functionally, activates EIF2AK2/PKR in the absence of double-stranded RNA (dsRNA), leading to phosphorylation of EIF2S1/EFI2-alpha and inhibition of translation and induction of apoptosis. Required for siRNA production by DICER1 and for subsequent siRNA-mediated post-transcriptional gene silencing. Does not seem to be required for processing of pre-miRNA to miRNA by DICER1. Promotes UBC9-p53/TP53 association and sumoylation and phosphorylation of p53/TP53 at 'Lys-386' at 'Ser-392' respectively and enhances its activity in a EIF2AK2/PKR-dependent manner. This Homo sapiens (Human) protein is Interferon-inducible double-stranded RNA-dependent protein kinase activator A (PRKRA).